An 86-amino-acid chain; its full sequence is Large ribosomal subunit protein bL31B (86 aa).

Belongs to the bacterial ribosomal protein bL31 family. Type B subfamily. In terms of assembly, part of the 50S ribosomal subunit.

This is Large ribosomal subunit protein bL31B from Citrobacter koseri (strain ATCC BAA-895 / CDC 4225-83 / SGSC4696).